The primary structure comprises 189 residues: Resolvase (189 aa).

In terms of domain architecture, Resolvase/invertase-type recombinase catalytic spans 1 to 139 (MLVGYARVST…EGLRSAKARG (139 aa)). The active-site O-(5'-phospho-DNA)-serine intermediate is S9. The interval 130-151 (EGLRSAKARGRNGGRPSKRNDK) is disordered. The H-T-H motif DNA-binding region spans 165 to 184 (IVDIVKQTELSRATVYRILK).

The protein belongs to the site-specific recombinase resolvase family.

Functionally, a likely role for the res protein would be to stabilize pCP13 by reducing the number of plasmid multimers resulting from homologous recombination. The sequence is that of Resolvase (res) from Clostridium perfringens (strain 13 / Type A).